The sequence spans 108 residues: PTS system cellobiose-specific EIIB component (108 aa).

Residues 3–108 enclose the PTS EIIB type-3 domain; the sequence is DKVIALACAA…VLAAAENLMN (106 aa). C10 serves as the catalytic Phosphocysteine intermediate. The residue at position 10 (C10) is a Phosphocysteine; by EIIA.

The catalysed reaction is D-cellobiose(out) + N(pros)-phospho-L-histidyl-[protein] = 6-phospho-beta-D-glucosyl-(1-&gt;4)-D-glucose(in) + L-histidyl-[protein]. Its function is as follows. The phosphoenolpyruvate-dependent sugar phosphotransferase system (sugar PTS), a major carbohydrate active transport system, catalyzes the phosphorylation of incoming sugar substrates concomitantly with their translocation across the cell membrane. Involved in cellobiose transport with PtcA and CelB. This system can also transport lactose. This is PTS system cellobiose-specific EIIB component from Lactococcus lactis subsp. lactis (strain IL1403) (Streptococcus lactis).